A 227-amino-acid chain; its full sequence is RNA pyrophosphohydrolase (227 aa).

The 144-residue stretch at 6–149 (GFRPNVGIIL…KRDVYQMALT (144 aa)) folds into the Nudix hydrolase domain. The Nudix box signature appears at 38 to 59 (GGIKYGETPEQAMYRELHEEIG). The tract at residues 165–227 (PYGTHGAHGA…PVSTTRSTDD (63 aa)) is disordered. The span at 192-201 (AQAAQQADAD) shows a compositional bias: low complexity. The span at 217–227 (TPVSTTRSTDD) shows a compositional bias: polar residues.

It belongs to the Nudix hydrolase family. RppH subfamily. The cofactor is a divalent metal cation.

Accelerates the degradation of transcripts by removing pyrophosphate from the 5'-end of triphosphorylated RNA, leading to a more labile monophosphorylated state that can stimulate subsequent ribonuclease cleavage. In Cupriavidus taiwanensis (strain DSM 17343 / BCRC 17206 / CCUG 44338 / CIP 107171 / LMG 19424 / R1) (Ralstonia taiwanensis (strain LMG 19424)), this protein is RNA pyrophosphohydrolase.